The primary structure comprises 1032 residues: Vacuolar membrane protease (1032 aa).

At 1–11 the chain is on the cytoplasmic side; that stretch reads MRFQNPFAFRP. The chain crosses the membrane as a helical span at residues 12–32; it reads GPVSFWTTVIYLALVIPLIYV. Topologically, residues 33 to 426 are vacuolar; sequence HETVPPAPSD…AWAVFALRGL (394 aa). Asn50 and Asn142 each carry an N-linked (GlcNAc...) asparagine glycan. Zn(2+) contacts are provided by His207 and Asp219. The active-site Proton acceptor is the Glu253. Residues Glu254, Glu279, and His352 each coordinate Zn(2+). Residues 427–447 traverse the membrane as a helical segment; the sequence is FAWSLTLLVATPLILVAITYI. Residues 448-482 lie on the Cytoplasmic side of the membrane; it reads LARKDKYYFFSRDIKMHHDINDDPVVLGGWKGFLR. A helical transmembrane segment spans residues 483–503; sequence FPFALVFAGALTIASTLLLAK. Topologically, residues 504–511 are vacuolar; that stretch reads FNPLIIYS. The chain crosses the membrane as a helical span at residues 512 to 532; the sequence is SPYAVWSMTLSIFYFSFWLIM. The Cytoplasmic portion of the chain corresponds to 533 to 545; sequence RGASFIRPSALHR. The helical transmembrane segment at 546–566 threads the bilayer; it reads GYVLIWLFALGWGLQVVGAVA. At 567 to 573 the chain is on the vacuolar side; sequence EDRLHIA. Residues 574–594 traverse the membrane as a helical segment; that stretch reads ALYATVFLQSAVFLALFISLL. The Cytoplasmic segment spans residues 595 to 708; the sequence is EQFALLGKHD…WSGRLPSWTW (114 aa). Positions 616–631 are enriched in basic and acidic residues; that stretch reads RDISSHGTDHESRPQP. Residues 616–666 form a disordered region; it reads RDISSHGTDHESRPQPEEEPAQPEGDEDESEDATETTPLRANEPGYGSSTR. Over residues 632 to 649 the composition is skewed to acidic residues; it reads EEEPAQPEGDEDESEDAT. A helical transmembrane segment spans residues 709–729; it reads IIQFLLLAPVPVILFGNLGLV. The Vacuolar portion of the chain corresponds to 730–745; the sequence is AMSALQMTGTDGGSLL. A helical transmembrane segment spans residues 746 to 766; the sequence is VPVLTLGIVSIFLLLPLTPFI. Over 767–773 the chain is Cytoplasmic; the sequence is HRVSHHV. The helical transmembrane segment at 774–794 threads the bilayer; that stretch reads PMFLLCVFAGTFIYNLVAFPF. Residues 795 to 1032 lie on the Vacuolar side of the membrane; that stretch reads SDSHRFKFYF…LVEVRKTYKV (238 aa). 2 N-linked (GlcNAc...) asparagine glycosylation sites follow: Asn812 and Asn884.

Belongs to the peptidase M28 family. Zn(2+) serves as cofactor.

The protein localises to the vacuole membrane. Functionally, may be involved in vacuolar sorting and osmoregulation. The chain is Vacuolar membrane protease from Fusarium vanettenii (strain ATCC MYA-4622 / CBS 123669 / FGSC 9596 / NRRL 45880 / 77-13-4) (Fusarium solani subsp. pisi).